The primary structure comprises 174 residues: Probable inosine/xanthosine triphosphatase (174 aa).

Asp63 contacts Mg(2+).

Belongs to the YjjX NTPase family. As to quaternary structure, homodimer. The cofactor is Mg(2+). It depends on Mn(2+) as a cofactor.

The enzyme catalyses XTP + H2O = XDP + phosphate + H(+). The catalysed reaction is ITP + H2O = IDP + phosphate + H(+). Functionally, phosphatase that hydrolyzes non-canonical purine nucleotides such as XTP and ITP to their respective diphosphate derivatives. Probably excludes non-canonical purines from DNA/RNA precursor pool, thus preventing their incorporation into DNA/RNA and avoiding chromosomal lesions. This chain is Probable inosine/xanthosine triphosphatase, found in Methanocella arvoryzae (strain DSM 22066 / NBRC 105507 / MRE50).